Consider the following 169-residue polypeptide: S-ribosylhomocysteine lyase (169 aa).

Fe cation is bound by residues His-54, His-58, and Cys-128.

This sequence belongs to the LuxS family. In terms of assembly, homodimer. Requires Fe cation as cofactor.

The catalysed reaction is S-(5-deoxy-D-ribos-5-yl)-L-homocysteine = (S)-4,5-dihydroxypentane-2,3-dione + L-homocysteine. In terms of biological role, involved in the synthesis of autoinducer 2 (AI-2) which is secreted by bacteria and is used to communicate both the cell density and the metabolic potential of the environment. The regulation of gene expression in response to changes in cell density is called quorum sensing. Catalyzes the transformation of S-ribosylhomocysteine (RHC) to homocysteine (HC) and 4,5-dihydroxy-2,3-pentadione (DPD). In Sulfurovum sp. (strain NBC37-1), this protein is S-ribosylhomocysteine lyase.